We begin with the raw amino-acid sequence, 156 residues long: Small ribosomal subunit protein uS11 (156 aa).

The interval 1 to 27 is disordered; the sequence is MSEKEQKEVEAKESSGKAEERRETREK.

It belongs to the universal ribosomal protein uS11 family. As to quaternary structure, part of the 30S ribosomal subunit.

Functionally, located on the platform of the 30S subunit. This chain is Small ribosomal subunit protein uS11, found in Thermofilum pendens (strain DSM 2475 / Hrk 5).